Reading from the N-terminus, the 497-residue chain is Carboxylesterase (497 aa).

The active-site Acyl-ester intermediate is S185. Catalysis depends on charge relay system residues E319 and H415.

This sequence belongs to the type-B carboxylesterase/lipase family.

It is found in the secreted. The catalysed reaction is a carboxylic ester + H2O = an alcohol + a carboxylate + H(+). This is Carboxylesterase from Thermobifida fusca (strain YX).